A 477-amino-acid polypeptide reads, in one-letter code: Lactate utilization protein B (477 aa).

4Fe-4S ferredoxin-type domains follow at residues glycine 304 to tyrosine 334 and tyrosine 353 to leucine 382. 7 residues coordinate [4Fe-4S] cluster: cysteine 313, cysteine 316, cysteine 319, cysteine 323, cysteine 366, cysteine 369, and cysteine 373. The segment at lysine 433–lysine 477 is disordered. Basic and acidic residues predominate over residues arginine 461–lysine 477.

The protein belongs to the LutB/YkgF family.

Functionally, is involved in L-lactate degradation and allows cells to grow with lactate as the sole carbon source. Has probably a role as an electron transporter during oxidation of L-lactate. The protein is Lactate utilization protein B of Bacillus licheniformis (strain ATCC 14580 / DSM 13 / JCM 2505 / CCUG 7422 / NBRC 12200 / NCIMB 9375 / NCTC 10341 / NRRL NRS-1264 / Gibson 46).